A 1789-amino-acid chain; its full sequence is Protein TIC 214 (1789 aa).

The next 6 helical transmembrane spans lie at 19 to 39 (IINSVVVVGLYYGFLTTFSIG), 68 to 88 (FIAGQLMMFISIYYAPLHLAL), 91 to 111 (PHTITVLALPYLLFHFFWNNH), 133 to 153 (VFLNNLIFQLFNHFILPSSML), 176 to 196 (VGWLIGHILFMKWVGLVLVWI), and 227 to 247 (IFSILLFITCVYYLGRIPSPI).

Belongs to the TIC214 family. In terms of assembly, part of the Tic complex.

It is found in the plastid. The protein resides in the chloroplast inner membrane. In terms of biological role, involved in protein precursor import into chloroplasts. May be part of an intermediate translocation complex acting as a protein-conducting channel at the inner envelope. The protein is Protein TIC 214 of Capsella bursa-pastoris (Shepherd's purse).